Consider the following 673-residue polypeptide: Outer spore wall assembly protein SHE10 (673 aa).

A signal peptide spans 1–24; that stretch reads MRRVRGVGNLLVTILVVLIGFKQA. Residues 503-568 are a coiled coil; sequence ILRSQANIAF…LALEQGQGQE (66 aa). Disordered regions lie at residues 530 to 551 and 587 to 673; these read LEQE…AENE and TPLG…SQAN. 2 stretches are compositionally biased toward acidic residues: residues 593-605 and 612-629; these read DNTD…DDAD and GDSE…EEDA. A coiled-coil region spans residues 617–647; sequence NFYDSYEGDEEDASRELERLERESAERETLD. The span at 630–673 shows a compositional bias: basic and acidic residues; sequence SRELERLERESAERETLDRLELGQRQKLQEEQHRDELHHSSQAN.

This sequence belongs to the SHE10 family. As to quaternary structure, component of the mitochondria-localized RNase mitochondrial RNA-processing (RNase MRP) composed of one single RNA encoded by the NME1 gene and at least 31 proteins. Absent in the nucleus-localized RNase MRP (NuMRP).

The protein resides in the mitochondrion. Involved in spore wall assembly. May be a component of the mitochondrial RNase MRP (MtMRP), a ribonucleoprotein endoribonuclease involved in the cleaving RNA transcripts to generate primers for DNA replication in mitochondria. The protein is Outer spore wall assembly protein SHE10 of Lachancea thermotolerans (strain ATCC 56472 / CBS 6340 / NRRL Y-8284) (Yeast).